A 270-amino-acid polypeptide reads, in one-letter code: Undecaprenyl-diphosphatase (270 aa).

A run of 8 helical transmembrane segments spans residues 1–21, 39–59, 87–107, 114–134, 147–167, 193–213, 223–243, and 250–270; these read MDLFNAAILALIQGITEFLPI, QGLVFDIAANSGSLAAVMLYF, SHLVLQLALATIPVGLVGLAC, VARDPMIIATTSILFGLLLWW, ALSWRQVGIIGIAQAFALIPG, FLMAIPVGILAALLDLKDLFA, FLGVGFCVSGLSAYMVIHGLL, and TMTPFVVYRVVLGVVIFATLG.

Belongs to the UppP family.

It localises to the cell inner membrane. The enzyme catalyses di-trans,octa-cis-undecaprenyl diphosphate + H2O = di-trans,octa-cis-undecaprenyl phosphate + phosphate + H(+). In terms of biological role, catalyzes the dephosphorylation of undecaprenyl diphosphate (UPP). Confers resistance to bacitracin. The sequence is that of Undecaprenyl-diphosphatase from Magnetococcus marinus (strain ATCC BAA-1437 / JCM 17883 / MC-1).